A 527-amino-acid chain; its full sequence is Putative ABC transporter peptide-binding protein BOV_A0352 (527 aa).

An N-terminal signal peptide occupies residues 1–23 (MRLRNFYSALALSAAVFAGPLYA).

Belongs to the bacterial solute-binding protein 5 family. In terms of assembly, the complex is composed of two ATP-binding proteins (BOV_A0347 and BOV_A0348), two transmembrane proteins (BOV_A0350 and BOV_A0351) and a solute-binding protein (BOV_A0352).

Its subcellular location is the periplasm. In terms of biological role, probably part of an ABC transporter complex that could be involved in peptide import. In Brucella ovis (strain ATCC 25840 / 63/290 / NCTC 10512), this protein is Putative ABC transporter peptide-binding protein BOV_A0352.